A 192-amino-acid polypeptide reads, in one-letter code: Ion-translocating oxidoreductase complex subunit B (192 aa).

Residues 1-26 (MNTIWIAVGALTLLGLVFGAILGYAS) are hydrophobic. The 4Fe-4S domain occupies 32–91 (EDDPVVEKIDAILPQSQCGQCGYPGCRPYAEAVGLQGEKINRCAPGGEAVMLKIAELLNV). Cys49, Cys52, Cys57, Cys74, Cys117, Cys120, Cys123, Cys127, Cys147, Cys150, Cys153, and Cys157 together coordinate [4Fe-4S] cluster. 4Fe-4S ferredoxin-type domains follow at residues 108 to 137 (MLAV…GATR) and 138 to 167 (AMHT…LRPV).

The protein belongs to the 4Fe4S bacterial-type ferredoxin family. RnfB subfamily. The complex is composed of six subunits: RsxA, RsxB, RsxC, RsxD, RsxE and RsxG. [4Fe-4S] cluster serves as cofactor.

It is found in the cell inner membrane. In terms of biological role, part of a membrane-bound complex that couples electron transfer with translocation of ions across the membrane. Required to maintain the reduced state of SoxR. The protein is Ion-translocating oxidoreductase complex subunit B of Salmonella dublin (strain CT_02021853).